Consider the following 344-residue polypeptide: Dihydroorotate dehydrogenase (quinone) (344 aa).

FMN contacts are provided by residues 65–69 (AGLDK) and Thr89. Residue Lys69 participates in substrate binding. Residue 114–118 (NRMGF) coordinates substrate. FMN is bound by residues Asn145 and Asn178. Position 178 (Asn178) interacts with substrate. Catalysis depends on Ser181, which acts as the Nucleophile. Asn183 provides a ligand contact to substrate. 2 residues coordinate FMN: Lys223 and Thr251. 252–253 (NT) lines the substrate pocket. FMN-binding positions include Gly274, Gly303, and 324-325 (YT).

The protein belongs to the dihydroorotate dehydrogenase family. Type 2 subfamily. In terms of assembly, monomer. Requires FMN as cofactor.

It is found in the cell membrane. The catalysed reaction is (S)-dihydroorotate + a quinone = orotate + a quinol. Its pathway is pyrimidine metabolism; UMP biosynthesis via de novo pathway; orotate from (S)-dihydroorotate (quinone route): step 1/1. Its function is as follows. Catalyzes the conversion of dihydroorotate to orotate with quinone as electron acceptor. This is Dihydroorotate dehydrogenase (quinone) from Ralstonia nicotianae (strain ATCC BAA-1114 / GMI1000) (Ralstonia solanacearum).